A 466-amino-acid chain; its full sequence is Dynein axonemal assembly factor 11 (466 aa).

4 LRR repeats span residues 22-43 (SLEE…DKWC), 45-66 (DLKI…SKLK), 67-88 (KLEY…EGCE), and 89-110 (ELAK…KNLQ). The region spanning 123 to 161 (NPCASFDHYREFVVATLPQLKWLDGKEIEPSERIKALQD) is the LRRCT domain. The stretch at 178 to 204 (LKRAKLKEEAQRKHQEEDKNEDKRSNA) forms a coiled coil. A compositionally biased stretch (basic and acidic residues) spans 185-202 (EEAQRKHQEEDKNEDKRS). Disordered stretches follow at residues 185-206 (EEAQ…NAGF), 268-288 (MEKQ…VKPP), and 391-466 (AFKS…PPLI). Over residues 269-287 (EKQRKKQEKLSEKKKKVKP) the composition is skewed to basic residues. Positions 301 to 396 (VNEPKIDFSL…GGQRAFKSMK (96 aa)) constitute a CS domain. Composition is skewed to basic and acidic residues over residues 398–425 (TSDR…KHSF) and 433–445 (QEKK…RPEP). Residues 450-460 (SEEDPTFEDNP) are compositionally biased toward acidic residues.

The protein belongs to the tilB family. In terms of assembly, interacts (via CS domain) with ZMYND10 (via C-terminus). In terms of tissue distribution, expressed predominantly in testis and in nasal epithelial cells.

It is found in the cytoplasm. Its subcellular location is the cell projection. The protein resides in the cilium. It localises to the dynein axonemal particle. The protein localises to the flagellum. In terms of biological role, involved in dynein arm assembly, is important for expression and transporting outer dynein arm (ODA) proteins from the cytoplasm to the cilia. Acts as a crucial component in the formation and motility of spermatozoal flagella. This chain is Dynein axonemal assembly factor 11, found in Homo sapiens (Human).